The following is a 221-amino-acid chain: Probable glutathione S-transferase (221 aa).

A GST N-terminal domain is found at Glu-4–Ala-83. Residues Ser-14, Lys-41, Ile-55, and Glu-67–Ser-68 each bind glutathione. Residues Asp-90–Leu-214 form the GST C-terminal domain.

Belongs to the GST superfamily. HSP26 family. As to expression, root tip-specific expression.

The enzyme catalyses RX + glutathione = an S-substituted glutathione + a halide anion + H(+). The protein is Probable glutathione S-transferase of Nicotiana tabacum (Common tobacco).